The sequence spans 477 residues: Argininosuccinate lyase (477 aa).

Over residues 1-18 (MTTSSHSSEQPTSTQTSG) the composition is skewed to polar residues. The disordered stretch occupies residues 1 to 21 (MTTSSHSSEQPTSTQTSGMWG).

The protein belongs to the lyase 1 family. Argininosuccinate lyase subfamily.

Its subcellular location is the cytoplasm. It carries out the reaction 2-(N(omega)-L-arginino)succinate = fumarate + L-arginine. The protein operates within amino-acid biosynthesis; L-arginine biosynthesis; L-arginine from L-ornithine and carbamoyl phosphate: step 3/3. The protein is Argininosuccinate lyase of Acinetobacter baylyi (strain ATCC 33305 / BD413 / ADP1).